Here is a 284-residue protein sequence, read N- to C-terminus: Syntaxin-like protein psy1 (284 aa).

Residues 23–57 adopt a coiled-coil conformation; that stretch reads EEIDHIRDAIRQIEDNVGRIEMLHQQSLQEIDEAN. The t-SNARE coiled-coil homology domain maps to 181-243; the sequence is LREVQERHAD…GEGTQHMDRA (63 aa). The chain crosses the membrane as a helical; Anchor for type IV membrane protein span at residues 260 to 280; sequence ICVVIICVIVAVLCGVLIPVL.

The protein belongs to the syntaxin family.

The protein resides in the cell membrane. It is found in the prospore membrane. This Schizosaccharomyces pombe (strain 972 / ATCC 24843) (Fission yeast) protein is Syntaxin-like protein psy1 (psy1).